The sequence spans 528 residues: Probable feruloyl esterase B-1 (528 aa).

The signal sequence occupies residues 1–19 (MMWWFLLIGLASAAATASS). Cystine bridges form between Cys29-Cys78, Cys64-Cys117, Cys190-Cys445, Cys259-Cys276, Cys285-Cys295, and Cys505-Cys527. N-linked (GlcNAc...) asparagine glycosylation is found at Asn83 and Asn101. The Acyl-ester intermediate role is filled by Ser191. Residues Asp260, Asp263, Ala265, Asp267, and Ile269 each coordinate Ca(2+). N-linked (GlcNAc...) asparagine glycans are attached at residues Asn286, Asn354, and Asn385. Active-site charge relay system residues include Asp404 and His444.

It belongs to the tannase family.

The protein localises to the secreted. The enzyme catalyses feruloyl-polysaccharide + H2O = ferulate + polysaccharide.. Functionally, involved in degradation of plant cell walls. Hydrolyzes the feruloyl-arabinose ester bond in arabinoxylans as well as the feruloyl-galactose and feruloyl-arabinose ester bonds in pectin. The sequence is that of Probable feruloyl esterase B-1 (faeB-1) from Aspergillus fumigatus (strain ATCC MYA-4609 / CBS 101355 / FGSC A1100 / Af293) (Neosartorya fumigata).